The following is a 732-amino-acid chain: Translation initiation factor eIF2B subunit epsilon (732 aa).

One can recognise a W2 domain in the interval 559 to 726; it reads GEEEEDFGVE…QEADEEDSDE (168 aa).

The protein belongs to the eIF-2B gamma/epsilon subunits family. In terms of assembly, component of the translation initiation factor 2B (eIF2B) complex which is a heterodecamer of two sets of five different subunits: alpha, beta, gamma, delta and epsilon. Subunits alpha, beta and delta comprise a regulatory subcomplex and subunits epsilon and gamma comprise a catalytic subcomplex. Within the complex, the hexameric regulatory complex resides at the center, with the two heterodimeric catalytic subcomplexes bound on opposite sides.

The protein resides in the cytoplasm. It localises to the cytosol. Functionally, acts as a component of the translation initiation factor 2B (eIF2B) complex, which catalyzes the exchange of GDP for GTP on the eukaryotic initiation factor 2 (eIF2) complex gamma subunit. Its guanine nucleotide exchange factor activity is repressed when bound to eIF2 complex phosphorylated on the alpha subunit, thereby limiting the amount of methionyl-initiator methionine tRNA available to the ribosome and consequently global translation is repressed. The polypeptide is Translation initiation factor eIF2B subunit epsilon (GCD6) (Candida albicans (strain SC5314 / ATCC MYA-2876) (Yeast)).